We begin with the raw amino-acid sequence, 363 residues long: Cytochrome b (363 aa).

The next 4 helical transmembrane spans lie at 23 to 43 (FGFI…MLSF), 67 to 89 (WFVR…LHIM), 102 to 122 (SWYS…VGYV), and 164 to 184 (FFSI…FHLY). Heme b-binding residues include H73 and H87. H168 and H182 together coordinate heme b. A ubiquinone is bound at residue H187. 4 helical membrane passes run 210 to 230 (VLFS…VQSG), 271 to 291 (VFPT…LLVL), 310 to 330 (VWTT…SIGK), and 332 to 352 (VVHV…VLFI).

The protein belongs to the cytochrome b family. The main subunits of complex b-c1 are: cytochrome b, cytochrome c1 and the Rieske protein. Requires heme b as cofactor.

Its subcellular location is the mitochondrion inner membrane. In terms of biological role, component of the ubiquinol-cytochrome c reductase complex (complex III or cytochrome b-c1 complex) that is part of the mitochondrial respiratory chain. The b-c1 complex mediates electron transfer from ubiquinol to cytochrome c. Contributes to the generation of a proton gradient across the mitochondrial membrane that is then used for ATP synthesis. This chain is Cytochrome b (MT-CYB), found in Theileria annulata.